A 252-amino-acid polypeptide reads, in one-letter code: Ribosomal RNA small subunit methyltransferase NEP1 (252 aa).

S-adenosyl-L-methionine is bound by residues Met176, Gly209, Gly214, and 227 to 232; that span reads ISNYPL.

This sequence belongs to the class IV-like SAM-binding methyltransferase superfamily. RNA methyltransferase NEP1 family. As to quaternary structure, homodimer. Part of the small subunit (SSU) processome, composed of more than 70 proteins and the RNA chaperone small nucleolar RNA (snoRNA) U3.

It is found in the nucleus. Its subcellular location is the nucleolus. It carries out the reaction a pseudouridine in rRNA + S-adenosyl-L-methionine = an N(1)-methylpseudouridine in rRNA + S-adenosyl-L-homocysteine + H(+). In terms of biological role, S-adenosyl-L-methionine-dependent pseudouridine N(1)-methyltransferase that methylates a pseudouridine in 18S rRNA. Involved the biosynthesis of the hypermodified N1-methyl-N3-(3-amino-3-carboxypropyl) pseudouridine (m1acp3-Psi) conserved in eukaryotic 18S rRNA. Also has an essential role in 40S ribosomal subunit biogenesis independent on its methyltransferase activity, facilitating the incorporation of ribosomal protein S19 during the formation of pre-ribosomes. Its function is as follows. S-adenosyl-L-methionine-dependent pseudouridine N(1)-methyltransferase that methylates pseudouridine at position in 18S rRNA. Involved the biosynthesis of the hypermodified N1-methyl-N3-(3-amino-3-carboxypropyl) pseudouridine (m1acp3-Psi) conserved in eukaryotic 18S rRNA. Is not able to methylate uridine at this position. Also has an essential role in 40S ribosomal subunit biogenesis independent on its methyltransferase activity, facilitating the incorporation of ribosomal protein S19 during the formation of pre-ribosomes. Part of the small subunit (SSU) processome, first precursor of the small eukaryotic ribosomal subunit. During the assembly of the SSU processome in the nucleolus, many ribosome biogenesis factors, an RNA chaperone and ribosomal proteins associate with the nascent pre-rRNA and work in concert to generate RNA folding, modifications, rearrangements and cleavage as well as targeted degradation of pre-ribosomal RNA by the RNA exosome. The sequence is that of Ribosomal RNA small subunit methyltransferase NEP1 from Drosophila melanogaster (Fruit fly).